Consider the following 107-residue polypeptide: Wound-induced proteinase inhibitor 1 (107 aa).

An N-terminal signal peptide occupies residues 1–23; sequence MESKFAHIIVFFLLATSFETLLA. The propeptide occupies 24–36; the sequence is RKESDGPEVIELQ.

It belongs to the protease inhibitor I13 (potato type I serine protease inhibitor) family. Heterogeneous tetramers of similar chains.

In terms of biological role, inhibits both chymotrypsin and trypsin. This chain is Wound-induced proteinase inhibitor 1, found in Solanum tuberosum (Potato).